The sequence spans 78 residues: Acyl carrier protein (78 aa).

Residues 2-77 (SSIEERVKKI…QATSYVEANL (76 aa)) form the Carrier domain. Ser-37 bears the O-(pantetheine 4'-phosphoryl)serine mark.

It belongs to the acyl carrier protein (ACP) family. 4'-phosphopantetheine is transferred from CoA to a specific serine of apo-ACP by AcpS. This modification is essential for activity because fatty acids are bound in thioester linkage to the sulfhydryl of the prosthetic group.

It localises to the cytoplasm. The protein operates within lipid metabolism; fatty acid biosynthesis. In terms of biological role, carrier of the growing fatty acid chain in fatty acid biosynthesis. This Hydrogenovibrio crunogenus (strain DSM 25203 / XCL-2) (Thiomicrospira crunogena) protein is Acyl carrier protein.